We begin with the raw amino-acid sequence, 1554 residues long: Myosin-2 (1554 aa).

The Myosin N-terminal SH3-like domain occupies 4–57 (EVGTRCWYPDKQQGWIGGEITKHTNLSNKHQLELTLEDNQIVEIESETLDETKD). Positions 70–774 (EATEDLTSLS…MLAYLEKLRS (705 aa)) constitute a Myosin motor domain. ATP is bound at residue 164–171 (GESGAGKT). Positions 443–523 (FIGVLDIYGF…LGILSLLDEE (81 aa)) are actin-binding. IQ domains follow at residues 778-798 (HNSS…KKYL), 800-824 (IISS…DLEF), 825-847 (KTQA…KTIS), 848-872 (LLSA…LQRR), 873-895 (QRDA…SFNT), and 896-925 (TRRS…EAKS). Positions 926–1079 (VNHLKEVSYK…IARLQAAVRS (154 aa)) form a coiled coil. The tract at residues 1080–1554 (GVTSSTITST…VTVQESQRTE (475 aa)) is non alpha-helical, tail domain. Over residues 1082–1093 (TSSTITSTPTAS) the composition is skewed to low complexity. The interval 1082 to 1109 (TSSTITSTPTASRRFSAHSSVADGTSPR) is disordered. A compositionally biased stretch (polar residues) spans 1098–1109 (AHSSVADGTSPR). A Dilute domain is found at 1205 to 1480 (AEVLSTIQKL…LNFVADRVKK (276 aa)).

This sequence belongs to the TRAFAC class myosin-kinesin ATPase superfamily. Myosin family. In terms of assembly, homodimer. Interacts with calmodulin (CMD1) and the myosin light chain MLC1 through its IQ repeats.

Myosin heavy chain that is required for the cell cycle-regulated transport of various organelles and proteins for their segregation. Functions by binding with its tail domain to receptor proteins on organelles and exerting force with its N-terminal motor domain against actin filaments, thereby transporting its cargo along polarized actin cables. The sequence is that of Myosin-2 (MYO2) from Lachancea kluyveri (strain ATCC 58438 / CBS 3082 / BCRC 21498 / NBRC 1685 / JCM 7257 / NCYC 543 / NRRL Y-12651) (Yeast).